Consider the following 391-residue polypeptide: Inhibin beta B chain (391 aa).

Residues 1–25 (MDGAARRGVLAALLACGLLLLGAAA) form the signal peptide. The propeptide occupies 26-276 (TPTPPPAGSS…ADNKHRIRKR (251 aa)). Residues 27–47 (PTPPPAGSSPQDTCTSCGFRR) are disordered. A glycan (N-linked (GlcNAc...) asparagine) is linked at Asn-77. 4 cysteine pairs are disulfide-bonded: Cys-280–Cys-288, Cys-287–Cys-356, Cys-316–Cys-388, and Cys-320–Cys-390.

This sequence belongs to the TGF-beta family. As to quaternary structure, dimeric, linked by one or more disulfide bonds. Inhibin A is a dimer of alpha and beta-A. Inhibin B is a dimer of alpha and beta-B. Activin A is a homodimer of beta-A. Activin B is a homodimer of beta-B. Activin AB is a dimer of beta-A and beta-B.

The protein resides in the secreted. In terms of biological role, inhibins and activins inhibit and activate, respectively, the secretion of follitropin by the pituitary gland. Inhibins/activins are involved in regulating a number of diverse functions such as hypothalamic and pituitary hormone secretion, gonadal hormone secretion, germ cell development and maturation, erythroid differentiation, insulin secretion, nerve cell survival, embryonic axial development or bone growth, depending on their subunit composition. Inhibins appear to oppose the functions of activins. The protein is Inhibin beta B chain (INHBB) of Gallus gallus (Chicken).